The chain runs to 118 residues: MDIIRRIEQTMMREDVPPVEVGDTVRVKWRFTERDRSGEDKSRVQAYEGIVIAKKGTGISESIVVRKISSGVGVEKTFPLHSPNLVDLEVVTRGKVRRAKLYYLREKKHLVVKKKSRF.

This sequence belongs to the bacterial ribosomal protein bL19 family.

This protein is located at the 30S-50S ribosomal subunit interface and may play a role in the structure and function of the aminoacyl-tRNA binding site. The polypeptide is Large ribosomal subunit protein bL19 (Coprothermobacter proteolyticus (strain ATCC 35245 / DSM 5265 / OCM 4 / BT)).